We begin with the raw amino-acid sequence, 387 residues long: 1-deoxy-D-xylulose 5-phosphate reductoisomerase (387 aa).

The NADPH site is built by threonine 10, glycine 11, isoleucine 13, asparagine 38, and asparagine 122. Residue lysine 123 coordinates 1-deoxy-D-xylulose 5-phosphate. Glutamate 124 is a binding site for NADPH. A Mn(2+)-binding site is contributed by aspartate 148. 1-deoxy-D-xylulose 5-phosphate-binding residues include serine 149, glutamate 150, serine 174, and histidine 197. Mn(2+) is bound at residue glutamate 150. An NADPH-binding site is contributed by glycine 203. Serine 210, asparagine 215, lysine 216, and glutamate 219 together coordinate 1-deoxy-D-xylulose 5-phosphate. Position 219 (glutamate 219) interacts with Mn(2+).

Belongs to the DXR family. Mg(2+) serves as cofactor. Mn(2+) is required as a cofactor.

It carries out the reaction 2-C-methyl-D-erythritol 4-phosphate + NADP(+) = 1-deoxy-D-xylulose 5-phosphate + NADPH + H(+). It functions in the pathway isoprenoid biosynthesis; isopentenyl diphosphate biosynthesis via DXP pathway; isopentenyl diphosphate from 1-deoxy-D-xylulose 5-phosphate: step 1/6. In terms of biological role, catalyzes the NADPH-dependent rearrangement and reduction of 1-deoxy-D-xylulose-5-phosphate (DXP) to 2-C-methyl-D-erythritol 4-phosphate (MEP). This Ehrlichia canis (strain Jake) protein is 1-deoxy-D-xylulose 5-phosphate reductoisomerase.